The chain runs to 252 residues: Imidazole glycerol phosphate synthase subunit HisF (252 aa).

Catalysis depends on residues aspartate 12 and aspartate 131.

It belongs to the HisA/HisF family. Heterodimer of HisH and HisF.

It is found in the cytoplasm. It carries out the reaction 5-[(5-phospho-1-deoxy-D-ribulos-1-ylimino)methylamino]-1-(5-phospho-beta-D-ribosyl)imidazole-4-carboxamide + L-glutamine = D-erythro-1-(imidazol-4-yl)glycerol 3-phosphate + 5-amino-1-(5-phospho-beta-D-ribosyl)imidazole-4-carboxamide + L-glutamate + H(+). It participates in amino-acid biosynthesis; L-histidine biosynthesis; L-histidine from 5-phospho-alpha-D-ribose 1-diphosphate: step 5/9. In terms of biological role, IGPS catalyzes the conversion of PRFAR and glutamine to IGP, AICAR and glutamate. The HisF subunit catalyzes the cyclization activity that produces IGP and AICAR from PRFAR using the ammonia provided by the HisH subunit. This Thermus thermophilus (strain ATCC BAA-163 / DSM 7039 / HB27) protein is Imidazole glycerol phosphate synthase subunit HisF.